Here is a 125-residue protein sequence, read N- to C-terminus: Basic leucine zipper transcriptional factor ATF-like (125 aa).

The span at 1-14 (MPHSSDSSDSSFSR) shows a compositional bias: low complexity. A disordered region spans residues 1–58 (MPHSSDSSDSSFSRSPPPGKQDSSDDVRKVQRREKNRIAAQKSRQRQTQKADTLHLES). In terms of domain architecture, bZIP spans 26–89 (DVRKVQRREK…KYFTSVLSSH (64 aa)). The tract at residues 28-50 (RKVQRREKNRIAAQKSRQRQTQK) is basic motif. Ser-43 is subject to Phosphoserine. Thr-48 bears the Phosphothreonine mark. A leucine-zipper region spans residues 54–75 (LHLESEDLEKQNAALRKEIKQL).

The protein belongs to the bZIP family. Heterodimer; mainly heterodimerizes with JUNB. The BATF-JUNB heterodimer interacts with IRF4 and IRF8. Interacts (via bZIP domain) with IRF4 and IRF8; the interaction is direct. Also forms heterodimers with JUN and JUND. Interacts with IFI35. Post-translationally, phosphorylated on serine and threonine residues and at least one tyrosine residue. Phosphorylation at Ser-43 inhibit DNA binding activity and transforms it as a negative regulator of AP-1 mediated transcription.

It localises to the nucleus. Its subcellular location is the cytoplasm. AP-1 family transcription factor that controls the differentiation of lineage-specific cells in the immune system: specifically mediates the differentiation of T-helper 17 cells (Th17), follicular T-helper cells (TfH), CD8(+) dendritic cells and class-switch recombination (CSR) in B-cells. Acts via the formation of a heterodimer with JUNB that recognizes and binds DNA sequence 5'-TGA[CG]TCA-3'. The BATF-JUNB heterodimer also forms a complex with IRF4 (or IRF8) in immune cells, leading to recognition of AICE sequence (5'-TGAnTCA/GAAA-3'), an immune-specific regulatory element, followed by cooperative binding of BATF and IRF4 (or IRF8) and activation of genes. Controls differentiation of T-helper cells producing interleukin-17 (Th17 cells) by binding to Th17-associated gene promoters: regulates expression of the transcription factor RORC itself and RORC target genes such as IL17 (IL17A or IL17B). Also involved in differentiation of follicular T-helper cells (TfH) by directing expression of BCL6 and MAF. In B-cells, involved in class-switch recombination (CSR) by controlling the expression of both AICDA and of germline transcripts of the intervening heavy-chain region and constant heavy-chain region (I(H)-C(H)). Following infection, can participate in CD8(+) dendritic cell differentiation via interaction with IRF4 and IRF8 to mediate cooperative gene activation. Regulates effector CD8(+) T-cell differentiation by regulating expression of SIRT1. Following DNA damage, part of a differentiation checkpoint that limits self-renewal of hematopoietic stem cells (HSCs): up-regulated by STAT3, leading to differentiation of HSCs, thereby restricting self-renewal of HSCs. This is Basic leucine zipper transcriptional factor ATF-like (BATF) from Bos taurus (Bovine).